Here is a 401-residue protein sequence, read N- to C-terminus: Beta-ketoadipyl-CoA thiolase (401 aa).

Cys90 serves as the catalytic Acyl-thioester intermediate. Catalysis depends on proton acceptor residues His357 and Cys387.

It belongs to the thiolase-like superfamily. Thiolase family.

It catalyses the reaction succinyl-CoA + acetyl-CoA = 3-oxoadipyl-CoA + CoA. It participates in aromatic compound metabolism; beta-ketoadipate pathway; acetyl-CoA and succinyl-CoA from 3-oxoadipate: step 2/2. Its function is as follows. Catalyzes thiolytic cleavage of beta-ketoadipyl-CoA to succinyl-CoA and acetyl-CoA. This chain is Beta-ketoadipyl-CoA thiolase (pcaF), found in Acinetobacter baylyi (strain ATCC 33305 / BD413 / ADP1).